A 378-amino-acid polypeptide reads, in one-letter code: uncharacterized protein (378 aa).

This is an uncharacterized protein from Escherichia coli (strain K12).